Consider the following 208-residue polypeptide: Calcyphosin-like protein (208 aa).

4 consecutive EF-hand domains span residues 39–74 (AGIK…YAVV), 75–110 (MEKE…PMSR), 111–146 (ARKE…KHHP), and 154–191 (TEEQ…VSAS). 10 residues coordinate Ca(2+): Asp-52, Asn-54, Asn-56, Thr-58, Glu-63, Asp-88, Asp-90, Ser-92, Thr-94, and Glu-99.

The protein localises to the cytoplasm. The polypeptide is Calcyphosin-like protein (Capsl) (Mus musculus (Mouse)).